A 123-amino-acid polypeptide reads, in one-letter code: Small ribosomal subunit protein uS12 (123 aa).

Residues 11–32 (PRQEKTYREKARHLGASPQKRG) are disordered. Asp89 carries the post-translational modification 3-methylthioaspartic acid.

Belongs to the universal ribosomal protein uS12 family. As to quaternary structure, part of the 30S ribosomal subunit. Contacts proteins S8 and S17. May interact with IF1 in the 30S initiation complex.

Functionally, with S4 and S5 plays an important role in translational accuracy. Its function is as follows. Interacts with and stabilizes bases of the 16S rRNA that are involved in tRNA selection in the A site and with the mRNA backbone. Located at the interface of the 30S and 50S subunits, it traverses the body of the 30S subunit contacting proteins on the other side and probably holding the rRNA structure together. The combined cluster of proteins S8, S12 and S17 appears to hold together the shoulder and platform of the 30S subunit. This Methylocella silvestris (strain DSM 15510 / CIP 108128 / LMG 27833 / NCIMB 13906 / BL2) protein is Small ribosomal subunit protein uS12.